Consider the following 453-residue polypeptide: Allantoinase (453 aa).

6 residues coordinate Zn(2+): His-59, His-61, Lys-146, His-186, His-242, and Asp-315. Residue Lys-146 is modified to N6-carboxylysine.

This sequence belongs to the metallo-dependent hydrolases superfamily. Allantoinase family. In terms of assembly, homotetramer. Requires Zn(2+) as cofactor. Post-translationally, carboxylation allows a single lysine to coordinate two zinc ions.

It catalyses the reaction (S)-allantoin + H2O = allantoate + H(+). It functions in the pathway nitrogen metabolism; (S)-allantoin degradation; allantoate from (S)-allantoin: step 1/1. Its function is as follows. Catalyzes the conversion of allantoin (5-ureidohydantoin) to allantoic acid by hydrolytic cleavage of the five-member hydantoin ring. The polypeptide is Allantoinase (Salmonella paratyphi B (strain ATCC BAA-1250 / SPB7)).